A 584-amino-acid polypeptide reads, in one-letter code: MNNHIEALSYYLGAFVDELTRLNVCDVVISPGSRSTPIALLMEQHEGMNTYLHVDERSAGFFALGIAKAKKRPVALLCTSGTAAANYYPAVCEAFHSRVPLIVLTADRPHELRDVGAPQAMNQINLYGTFVKQFTEMAIPEANEAMYHYARMTTQRMIASALLAPQGPVHLNFPVREPLIPDFSLESLWDKGRGEYTGVVQRGNAVMPSEYVDSLVGRLSHMEKGLIICGDDSHSEIATFATQLAEKTGYPILADPLSNIRSGHHDKTMVIDCYDTFLRNVLLKETWKPEVIIRFGGMPVSKALTQFIKKQTKAVHIVVDESGQWRDPALVATEVVQASDIAFCSALIEKMPVMKKNDWSQMWQHINEKTKETLREMETYDTAFEGRVITDIVRVLPEGATLFASNSMPIRDTDSFFFTSDKNIQVMANRGVNGIDGIISTALGASMICDPLVLVIGDLSFYHDLNGLLAAKLHELNITIVVVNNDGGGIFSFLPQYEKKEHFESLFGTPIGLDYEHVVNMYGGSFSRVNGWEQFREEVQKGTTTEGLHVVEICTNRDENLTLHRTLWAKTQDVITTSLQGESK.

This sequence belongs to the TPP enzyme family. MenD subfamily. Homodimer. The cofactor is Mg(2+). Mn(2+) is required as a cofactor. Thiamine diphosphate serves as cofactor.

It carries out the reaction isochorismate + 2-oxoglutarate + H(+) = 5-enolpyruvoyl-6-hydroxy-2-succinyl-cyclohex-3-ene-1-carboxylate + CO2. It functions in the pathway quinol/quinone metabolism; 1,4-dihydroxy-2-naphthoate biosynthesis; 1,4-dihydroxy-2-naphthoate from chorismate: step 2/7. The protein operates within quinol/quinone metabolism; menaquinone biosynthesis. Functionally, catalyzes the thiamine diphosphate-dependent decarboxylation of 2-oxoglutarate and the subsequent addition of the resulting succinic semialdehyde-thiamine pyrophosphate anion to isochorismate to yield 2-succinyl-5-enolpyruvyl-6-hydroxy-3-cyclohexene-1-carboxylate (SEPHCHC). This Bacillus cereus (strain ATCC 10987 / NRS 248) protein is 2-succinyl-5-enolpyruvyl-6-hydroxy-3-cyclohexene-1-carboxylate synthase.